An 89-amino-acid chain; its full sequence is Small ribosomal subunit protein uS15 (89 aa).

It belongs to the universal ribosomal protein uS15 family. As to quaternary structure, part of the 30S ribosomal subunit. Forms a bridge to the 50S subunit in the 70S ribosome, contacting the 23S rRNA.

One of the primary rRNA binding proteins, it binds directly to 16S rRNA where it helps nucleate assembly of the platform of the 30S subunit by binding and bridging several RNA helices of the 16S rRNA. Its function is as follows. Forms an intersubunit bridge (bridge B4) with the 23S rRNA of the 50S subunit in the ribosome. The chain is Small ribosomal subunit protein uS15 from Maridesulfovibrio salexigens (strain ATCC 14822 / DSM 2638 / NCIMB 8403 / VKM B-1763) (Desulfovibrio salexigens).